Reading from the N-terminus, the 654-residue chain is Probable potassium transport system protein Kup (654 aa).

The next 13 helical transmembrane spans lie at 17 to 37, 40 to 60, 71 to 91, 99 to 119, 137 to 157, 164 to 184, 202 to 222, 240 to 260, 281 to 301, 338 to 358, 369 to 389, 394 to 414, and 423 to 443; these read GILVTLGIIYGDIGTSPLYVM, IIGLHTIKPEVVLGGISAIFW, VLITLSADNHGEGGIFALYAL, WLIIPAIIGGSALLADGIITP, INTVPIVIAILVVLFTIQQFG, FFAPMMMIWFAMLAILGILQI, LLSIHPDGFYVLGFVFLCTTG, ISWIFVKIALLLNYFGQGAYL, LVMPEWFQPFGIVISTMAAVI, IYIPSINWLLLAGCIGIVLHF, GLAIVLCMIMTTILLTYFMIL, WFIIAPLILLYLVIEFSFLIA, and GYVTLIIASALTFIMSIWYTA.

The protein belongs to the HAK/KUP transporter (TC 2.A.72) family.

The protein localises to the cell inner membrane. The catalysed reaction is K(+)(in) + H(+)(in) = K(+)(out) + H(+)(out). Functionally, transport of potassium into the cell. Likely operates as a K(+):H(+) symporter. This chain is Probable potassium transport system protein Kup, found in Flavobacterium psychrophilum (strain ATCC 49511 / DSM 21280 / CIP 103535 / JIP02/86).